We begin with the raw amino-acid sequence, 327 residues long: Putative hydroxymethylpyrimidine/phosphomethylpyrimidine kinase C18B5.05c (327 aa).

Glutamine 54 provides a ligand contact to 4-amino-5-hydroxymethyl-2-methylpyrimidine.

Belongs to the ThiD family.

Its subcellular location is the cytoplasm. It is found in the nucleus. It carries out the reaction 4-amino-5-hydroxymethyl-2-methylpyrimidine + ATP = 4-amino-2-methyl-5-(phosphooxymethyl)pyrimidine + ADP + H(+). It catalyses the reaction 4-amino-2-methyl-5-(phosphooxymethyl)pyrimidine + ATP = 4-amino-2-methyl-5-(diphosphooxymethyl)pyrimidine + ADP. The protein operates within cofactor biosynthesis; thiamine diphosphate biosynthesis; 4-amino-2-methyl-5-diphosphomethylpyrimidine from 5-amino-1-(5-phospho-D-ribosyl)imidazole: step 2/3. It participates in cofactor biosynthesis; thiamine diphosphate biosynthesis; 4-amino-2-methyl-5-diphosphomethylpyrimidine from 5-amino-1-(5-phospho-D-ribosyl)imidazole: step 3/3. Its function is as follows. Catalyzes the phosphorylation of hydroxymethylpyrimidine phosphate (HMP-P) to HMP-PP, and of HMP to HMP-P. This chain is Putative hydroxymethylpyrimidine/phosphomethylpyrimidine kinase C18B5.05c, found in Schizosaccharomyces pombe (strain 972 / ATCC 24843) (Fission yeast).